The following is a 263-amino-acid chain: Benzil reductase ((S)-benzoin forming) IRC24 (263 aa).

NADP(+)-binding residues include I7 and N86. S143 (proton donor) is an active-site residue. The NADP(+) site is built by Y157, K161, V190, and T192. Y157 functions as the Proton acceptor in the catalytic mechanism. The active-site Lowers pKa of active site Tyr is K161.

The protein belongs to the short-chain dehydrogenases/reductases (SDR) family.

It catalyses the reaction (S)-benzoin + NADP(+) = benzil + NADPH + H(+). The enzyme catalyses 2-hydroxy-1-phenyl-1-propanone + NADP(+) = 1-phenyl-1,2-propanedione + NADPH + H(+). Its function is as follows. Reduces benzil stereospecifically to (S)-benzoin. Also reduces 1-phenyl-1,2-propanedione to 2-hydroxy-1-phenyl-1-propanone. Is probably involved in a pathway contributing to genomic integrity. This chain is Benzil reductase ((S)-benzoin forming) IRC24 (IRC24), found in Saccharomyces cerevisiae (strain ATCC 204508 / S288c) (Baker's yeast).